Reading from the N-terminus, the 182-residue chain is Bifunctional protein PyrR (182 aa).

The PRPP-binding signature appears at 99–111; it reads VILVDDVLYTGRT.

This sequence belongs to the purine/pyrimidine phosphoribosyltransferase family. PyrR subfamily. In terms of assembly, homodimer and homohexamer; in equilibrium.

It carries out the reaction UMP + diphosphate = 5-phospho-alpha-D-ribose 1-diphosphate + uracil. Regulates transcriptional attenuation of the pyrimidine nucleotide (pyr) operon by binding in a uridine-dependent manner to specific sites on pyr mRNA. This disrupts an antiterminator hairpin in the RNA and favors formation of a downstream transcription terminator, leading to a reduced expression of downstream genes. In terms of biological role, also displays a weak uracil phosphoribosyltransferase activity which is not physiologically significant. In Alkaliphilus metalliredigens (strain QYMF), this protein is Bifunctional protein PyrR.